The chain runs to 747 residues: Protein neuralized (747 aa).

An NHR 1 domain is found at 97 to 251 (PLQFHTVHGD…NCTGIEFLDA (155 aa)). The span at 280-292 (LPQQQQQLPQQQL) shows a compositional bias: low complexity. The segment at 280 to 309 (LPQQQQQLPQQQLTAHHPLQQSRRSLPGGT) is disordered. One can recognise an NHR 2 domain in the interval 359 to 514 (PVPFHITKGR…STQSLRMFRQ (156 aa)). Residues 694-735 (CTICYENPIDSVLYMCGHMCMCYDCAIEQWRGVGGGQCPLCR) form an RING-type zinc finger.

It is found in the nucleus. Its function is as follows. Involved in neurogenesis. Interacts with other neurogenic proteins in the specification of the neuroblast versus epidermoblast cell fate. The protein is Protein neuralized (neur) of Drosophila virilis (Fruit fly).